A 356-amino-acid chain; its full sequence is uncharacterized protein (356 aa).

This is an uncharacterized protein from Acanthamoeba polyphaga (Amoeba).